The following is a 435-amino-acid chain: Ribulose bisphosphate carboxylase large chain (435 aa).

K5 is modified (N6,N6,N6-trimethyllysine). The substrate site is built by N114 and T164. The active-site Proton acceptor is the K166. K168 is a substrate binding site. K192, D194, and E195 together coordinate Mg(2+). K192 is modified (N6-carboxylysine). H285 serves as the catalytic Proton acceptor. R286, H318, and S370 together coordinate substrate.

It belongs to the RuBisCO large chain family. Type I subfamily. As to quaternary structure, heterohexadecamer of 8 large chains and 8 small chains; disulfide-linked. The disulfide link is formed within the large subunit homodimers. It depends on Mg(2+) as a cofactor. Post-translationally, the disulfide bond which can form in the large chain dimeric partners within the hexadecamer appears to be associated with oxidative stress and protein turnover.

The protein resides in the plastid. The protein localises to the chloroplast. It carries out the reaction 2 (2R)-3-phosphoglycerate + 2 H(+) = D-ribulose 1,5-bisphosphate + CO2 + H2O. It catalyses the reaction D-ribulose 1,5-bisphosphate + O2 = 2-phosphoglycolate + (2R)-3-phosphoglycerate + 2 H(+). RuBisCO catalyzes two reactions: the carboxylation of D-ribulose 1,5-bisphosphate, the primary event in carbon dioxide fixation, as well as the oxidative fragmentation of the pentose substrate in the photorespiration process. Both reactions occur simultaneously and in competition at the same active site. This is Ribulose bisphosphate carboxylase large chain from Drosera burmannii (Burmese sundew).